The following is a 205-amino-acid chain: Adenylyl-sulfate kinase (205 aa).

39 to 46 (GLSGAGKS) lines the ATP pocket. Ser113 functions as the Phosphoserine intermediate in the catalytic mechanism.

It belongs to the APS kinase family.

It carries out the reaction adenosine 5'-phosphosulfate + ATP = 3'-phosphoadenylyl sulfate + ADP + H(+). Its pathway is sulfur metabolism; hydrogen sulfide biosynthesis; sulfite from sulfate: step 2/3. Its function is as follows. Catalyzes the synthesis of activated sulfate. In Vibrio parahaemolyticus serotype O3:K6 (strain RIMD 2210633), this protein is Adenylyl-sulfate kinase.